We begin with the raw amino-acid sequence, 654 residues long: MSDIDVLLQETRTFPPSEEFRAGAWVRDNALREAAAADPVGFWAKESEALDWMTPWSTALEWEPPRAKWFQGGTLNASVNCIDRHVHGPRRNKAALIWEGEPGDRRTFTYWDLYREVNLAANMLKKLGVGRGDRVAIYLPMIPEAVIAMLACARIGAIHTVVFGGFAPESLRDRINDCGCKLLITADGGSRRGQMVPLKRNADVALKECPSIENVLVVMRRRSGVGDETFAEMQEGRDHWWHRLKRQVPRYCEPEAMDAEDVLFVLYTSGTTGKPKGIVHTTGGFLTGVATTTKYTFDLKEEDVYWCTADIGWITGHSYLVYGPLANGATCVMYEGAPDWPDKDRFWQICERYGVTILYTAPTAIRAFMKWGTEYVKKHDLSQLRVLGSVGEPINPEAWMWYHEHIGDFQCPIVDTWWQTETGAIMITPLPGVTTTKPGSATVPFPGIRTALLDANANELTVGGGLLAITHPWPSMLRTIWGDDQRYVDTYFSKWPGRPDLYFPGDGAKLDEDGYLWILGRVDDVLNVSGHRIGTMEVESALVDHPSVAEAAVVGKHHDLKGQAIAAFVTLRAGFTASGSLRDELRDHVAQKIGALARPDDILFSADLPKTRSGKIMRRLLRDIAEGRALGDTTTLADPSVVASLKDQYEAQES.

CoA-binding positions include 191–194 and threonine 315; that span reads RRGQ. ATP-binding positions include 391–393, 415–420, aspartate 506, and arginine 521; these read GEP and DTWWQT. Serine 529 provides a ligand contact to CoA. Arginine 532 serves as a coordination point for ATP. Positions 543, 545, and 548 each coordinate Mg(2+). Residue lysine 615 is modified to N6-acetyllysine.

The protein belongs to the ATP-dependent AMP-binding enzyme family. Mg(2+) serves as cofactor. In terms of processing, acetylated. Deacetylation by the SIR2-homolog deacetylase activates the enzyme.

The catalysed reaction is acetate + ATP + CoA = acetyl-CoA + AMP + diphosphate. Catalyzes the conversion of acetate into acetyl-CoA (AcCoA), an essential intermediate at the junction of anabolic and catabolic pathways. AcsA undergoes a two-step reaction. In the first half reaction, AcsA combines acetate with ATP to form acetyl-adenylate (AcAMP) intermediate. In the second half reaction, it can then transfer the acetyl group from AcAMP to the sulfhydryl group of CoA, forming the product AcCoA. This is Acetyl-coenzyme A synthetase from Gemmatimonas aurantiaca (strain DSM 14586 / JCM 11422 / NBRC 100505 / T-27).